We begin with the raw amino-acid sequence, 93 residues long: Small ribosomal subunit protein uS19 (93 aa).

It belongs to the universal ribosomal protein uS19 family.

Functionally, protein S19 forms a complex with S13 that binds strongly to the 16S ribosomal RNA. This chain is Small ribosomal subunit protein uS19, found in Latilactobacillus sakei subsp. sakei (strain 23K) (Lactobacillus sakei subsp. sakei).